The sequence spans 76 residues: Potassium/proton antiporter CemA (76 aa).

The helical transmembrane segment at 35-52 threads the bilayer; sequence QILSCLVSIFPVILDTIF.

It belongs to the CemA family.

The protein resides in the plastid. Its subcellular location is the chloroplast inner membrane. It carries out the reaction K(+)(in) + H(+)(out) = K(+)(out) + H(+)(in). In terms of biological role, contributes to K(+)/H(+) antiport activity by supporting proton efflux to control proton extrusion and homeostasis in chloroplasts in a light-dependent manner to modulate photosynthesis. Prevents excessive induction of non-photochemical quenching (NPQ) under continuous-light conditions. Indirectly promotes efficient inorganic carbon uptake into chloroplasts. The polypeptide is Potassium/proton antiporter CemA (Vicia faba (Broad bean)).